A 254-amino-acid chain; its full sequence is Major prion protein (254 aa).

The signal sequence occupies residues methionine 1 to cysteine 22. Residues lysine 23–serine 231 form an interaction with GRB2, ERI3 and SYN1 region. The tract at residues arginine 25 to serine 108 is disordered. 5 tandem repeats follow at residues proline 51 to glutamine 59, proline 60 to glutamine 67, proline 68 to glutamine 75, proline 76 to glutamine 83, and proline 84 to glutamine 91. Positions proline 51–glutamine 91 are 5 X 8 AA tandem repeats of P-H-G-G-G-W-G-Q. Gly residues predominate over residues glutamine 52–threonine 95. Cu(2+) contacts are provided by histidine 61, glycine 62, glycine 63, histidine 69, glycine 70, glycine 71, histidine 77, glycine 78, glycine 79, histidine 85, glycine 86, and glycine 87. The prP27-30 (protease resistant core) stretch occupies residues glycine 90 to serine 231. A disulfide bridge links cysteine 179 with cysteine 214. Asparagine 181 and asparagine 197 each carry an N-linked (GlcNAc...) asparagine glycan. A lipid anchor (GPI-anchor amidated serine) is attached at serine 231. The propeptide at serine 232–glycine 254 is removed in mature form.

Belongs to the prion family. Monomer and homodimer. Has a tendency to aggregate into amyloid fibrils containing a cross-beta spine, formed by a steric zipper of superposed beta-strands. Soluble oligomers may represent an intermediate stage on the path to fibril formation. Copper binding may promote oligomerization. Interacts with GRB2, APP, ERI3/PRNPIP and SYN1. Mislocalized cytosolically exposed PrP interacts with MGRN1; this interaction alters MGRN1 subcellular location and causes lysosomal enlargement. Interacts with KIAA1191.

Its subcellular location is the cell membrane. It is found in the golgi apparatus. Its function is as follows. Its primary physiological function is unclear. Has cytoprotective activity against internal or environmental stresses. May play a role in neuronal development and synaptic plasticity. May be required for neuronal myelin sheath maintenance. May play a role in iron uptake and iron homeostasis. Soluble oligomers are toxic to cultured neuroblastoma cells and induce apoptosis (in vitro). Association with GPC1 (via its heparan sulfate chains) targets PRNP to lipid rafts. Also provides Cu(2+) or Zn(2+) for the ascorbate-mediated GPC1 deaminase degradation of its heparan sulfate side chains. In Nothocricetulus migratorius (Gray dwarf hamster), this protein is Major prion protein (PRNP).